Reading from the N-terminus, the 4128-residue chain is DNA-dependent protein kinase catalytic subunit (4128 aa).

Lys-117 is modified (N6-acetyllysine). The stretch at 288 to 323 (DNYVSLFEVLLKWCAHTNVELKKAALSALESFLKQV) is one HEAT 1 repeat. A phosphoserine mark is found at Ser-511 and Ser-687. Position 828 is an N6-acetyllysine (Lys-828). Residues Ser-841 and Ser-893 each carry the phosphoserine modification. The HEAT 2 repeat unit spans residues 1004 to 1040 (QDTVALLEAILDGIVDPVDSTLRDFCGRCIREFLKWS). Ser-1065 carries the post-translational modification Phosphoserine. At Lys-1209 the chain carries N6-acetyllysine. Residues 1503–1538 (LDLSCKQLASGLLELAFAFGGLCERLVSLLLNPAVL) are interaction with C1D. The leucine-zipper stretch occupies residues 1503 to 1538 (LDLSCKQLASGLLELAFAFGGLCERLVSLLLNPAVL). One copy of the TPR 1 repeat lies at 1723-1756 (PMQSREFPPGTPRFNNYVDCMKKFLDALELSQSP). Position 1970 is an N6-acetyllysine (Lys-1970). A disordered region spans residues 2050-2073 (QSYSYSSQDPRPATGRFRRREQRD). Ser-2056 is modified (phosphoserine; by autocatalysis). Residue Lys-2259 is modified to N6-acetyllysine. Residues 2436–3212 (LDIIYKMMPK…DNSMNVDQDG (777 aa)) are KIP-binding. Phosphothreonine is present on Thr-2535. Residue Thr-2609 is modified to Phosphothreonine; by autocatalysis. Ser-2612 is modified (phosphoserine; by autocatalysis). Phosphothreonine; by autocatalysis is present on residues Thr-2638 and Thr-2647. Positions 2737 to 2765 (EKLSLMYARKGVAEQKREKEIKSELKMKQ) are may split the end of the DNA molecule, with the two strands separating around the region. Ser-2789 bears the Phosphoserine mark. The FAT domain maps to 2906 to 3539 (PAKRVRGKAR…VYPFIISSES (634 aa)). TPR repeat units follow at residues 2920–2948 (VLRW…SEIG) and 2949–2982 (TKQI…QDWV). A disordered region spans residues 3200 to 3222 (LPEDNSMNVDQDGDPSDRMEVQE). Residue Ser-3205 is modified to Phosphoserine. Lys-3241, Lys-3260, Lys-3621, Lys-3638, and Lys-3642 each carry N6-acetyllysine. Residues 3722–4053 (FDERVTVMAS…ICYAKRKLAG (332 aa)) enclose the PI3K/PI4K catalytic domain. Residues 3728–3734 (VMASLRR) form a G-loop region. Phosphoserine occurs at positions 3731 and 3821. A catalytic loop region spans residues 3919–3927 (GIGDRHLNN). An activation loop region spans residues 3939–3964 (GIDFGHAFGSATQFLPVPELMPFRLT). At Ser-4026 the chain carries Phosphoserine. The region spanning 4096-4128 (SGLSEETQVKCLMDQATDPNILGRTWEGWEPWM) is the FATC domain.

Belongs to the PI3/PI4-kinase family. DNA-PK is a heterotrimer of PRKDC and the Ku dimer (composed of XRCC6/Ku70 and XRCC5/Ku86). Formation of this complex may be promoted by interaction with ILF3. Component of the core long-range non-homologous end joining (NHEJ) complex (also named DNA-PK complex) composed of PRKDC, LIG4, XRCC4, XRCC6/Ku70, XRCC5/Ku86 and NHEJ1/XLF. Additional component of the NHEJ complex includes PAXX. Following autophosphorylation, PRKDC dissociates from DNA. Interacts with DNA-PKcs-interacting protein (KIP) with the region upstream the kinase domain. PRKDC alone also interacts with and phosphorylates DCLRE1C, thereby activating the latent endonuclease activity of this protein. Interacts with C1D. Interacts with TTI1 and TELO2. Interacts with CIB1. Interacts with SETX. Interacts with NR4A3; the DNA-dependent protein kinase complex DNA-PK phosphorylates and activates NR4A3 and prevents NR4A3 ubiquitination and degradation. Interacts with BRAT1. Part of the HDP-RNP complex composed of at least HEXIM1, PRKDC, XRCC5, XRCC6, paraspeckle proteins (SFPQ, NONO, PSPC1, RBM14, and MATR3) and NEAT1 RNA. Interacts with KAT5. Post-translationally, autophosphorylated at two clusters, the T2609 cluster and the S2056 cluster. Autophosphorylated on Ser-2056, Thr-2609, Thr-2638 and Thr-2647. Ser-2056 and Thr-2609 are DNA damage-inducible phosphorylation sites (inducible with ionizing radiation, IR) dephosphorylated by PPP5C. Autophosphorylation induces a conformational change that leads to remodeling of the DNA-PK complex, requisite for efficient end processing and DNA repair. Autophosphorylation in trans within DNA-PK complexes loaded on DNA ends leads to the dissociation of PRKDC from DNA and the transition into the short-range NHEJ complex. Autophosphorylation of the T2609 cluster is required for hematopoietic development and protein synthesis in erythrocytes precursors. S-nitrosylated by GAPDH. In terms of processing, polyubiquitinated by RNF144A, leading to proteasomal degradation.

Its subcellular location is the nucleus. It is found in the nucleolus. The protein resides in the cytoplasm. The protein localises to the cytosol. It carries out the reaction L-seryl-[protein] + ATP = O-phospho-L-seryl-[protein] + ADP + H(+). It catalyses the reaction L-threonyl-[protein] + ATP = O-phospho-L-threonyl-[protein] + ADP + H(+). With respect to regulation, activity seems to be attenuated by autophosphorylation. Binding to the SL1 region of U3 small nucleolar RNA promotes auto-phosphorylation activity. Inhibited by wortmannin. Serine/threonine-protein kinase that acts as a molecular sensor for DNA damage. Involved in DNA non-homologous end joining (NHEJ) required for double-strand break (DSB) repair and V(D)J recombination. Must be bound to DNA to express its catalytic properties. Promotes processing of hairpin DNA structures in V(D)J recombination by activation of the hairpin endonuclease artemis (DCLRE1C). Recruited by XRCC5 and XRCC6 to DNA ends and is required to (1) protect and align broken ends of DNA, thereby preventing their degradation, (2) and sequester the DSB for repair by NHEJ. Acts as a scaffold protein to aid the localization of DNA repair proteins to the site of damage. The assembly of the DNA-PK complex at DNA ends is also required for the NHEJ ligation step. Found at the ends of chromosomes, suggesting a further role in the maintenance of telomeric stability and the prevention of chromosomal end fusion. Also involved in modulation of transcription. As part of the DNA-PK complex, involved in the early steps of ribosome assembly by promoting the processing of precursor rRNA into mature 18S rRNA in the small-subunit processome. Binding to U3 small nucleolar RNA, recruits PRKDC and XRCC5/Ku86 to the small-subunit processome. Recognizes the substrate consensus sequence [ST]-Q. Phosphorylates 'Ser-139' of histone variant H2AX, thereby regulating DNA damage response mechanism. Phosphorylates ASF1A, DCLRE1C, c-Abl/ABL1, histone H1, HSPCA, c-jun/JUN, p53/TP53, PARP1, POU2F1, DHX9, FH, SRF, NHEJ1/XLF, XRCC1, XRCC4, XRCC5, XRCC6, WRN, MYC and RFA2. Can phosphorylate C1D not only in the presence of linear DNA but also in the presence of supercoiled DNA. Ability to phosphorylate p53/TP53 in the presence of supercoiled DNA is dependent on C1D. Acts as a regulator of the phosphatidylinositol 3-kinase/protein kinase B signal transduction by mediating phosphorylation of 'Ser-473' of protein kinase B (PKB/AKT1, PKB/AKT2, PKB/AKT3), promoting their activation. Contributes to the determination of the circadian period length by antagonizing phosphorylation of CRY1 'Ser-588' and increasing CRY1 protein stability, most likely through an indirect mechanism. Plays a role in the regulation of DNA virus-mediated innate immune response by assembling into the HDP-RNP complex, a complex that serves as a platform for IRF3 phosphorylation and subsequent innate immune response activation through the cGAS-STING pathway. Also regulates the cGAS-STING pathway by catalyzing phosphorylation of CGAS, thereby impairing CGAS oligomerization and activation. Also regulates the cGAS-STING pathway by mediating phosphorylation of PARP1. The protein is DNA-dependent protein kinase catalytic subunit (PRKDC) of Homo sapiens (Human).